Here is a 1705-residue protein sequence, read N- to C-terminus: Clathrin heavy chain 1 (1705 aa).

Residue alanine 2 is modified to N-acetylalanine. A globular terminal domain region spans residues 2–492 (AAANAPIIMK…VDNDLALKIY (491 aa)). 7 WD40-like repeat regions span residues 25–67 (FITF…RPIT), 68–113 (ADSA…MPEQ), 114–155 (VAFW…ANLA), 156–205 (NNQI…QALE), 206–270 (AHAA…PDFA), 271–314 (DDFP…ISPD), and 315–343 (PIFLTSEASSVGGFYAINRRGQVLLATVN). Residues 462–478 (ENWLAEDKLECSEELGD) are binding site for the uncoating ATPase, involved in lattice disassembly. A flexible linker region spans residues 493 to 536 (IKARATPKVVAAFAERREFDKILIYSKQVGYTPDYMFLLQTILR). The distal segment stretch occupies residues 537–648 (TDPQGAVNFA…QSLKHYSELP (112 aa)). The heavy chain arm stretch occupies residues 537-1705 (TDPQGAVNFA…PYGMPPMGGY (1169 aa)). 7 CHCR repeats span residues 551–697 (QMEG…QIIV), 700–842 (CKEY…PEDF), 847–986 (ILSV…QLID), 993–1138 (LPES…VSDA), 1142–1283 (FIRA…FRLA), 1288–1434 (LNII…DIIN), and 1437–1580 (LNVL…KECF). Residues 653-1705 (VIVNTHAIEP…PYGMPPMGGY (1053 aa)) are proximal segment. The involved in binding clathrin light chain stretch occupies residues 1227–1536 (AAKIIYAFIS…YIYKKAGRWK (310 aa)). The interval 1564–1705 (AEQLLVYFIE…PYGMPPMGGY (142 aa)) is trimerization.

Belongs to the clathrin heavy chain family. Clathrin triskelions, composed of 3 heavy chains and 3 light chains, are the basic subunits of the clathrin coat. Interacts with SCYL2B.

Its subcellular location is the cytoplasmic vesicle membrane. The protein resides in the membrane. It is found in the coated pit. Its function is as follows. Clathrin is the major protein of the polyhedral coat of coated pits and vesicles. Mediates endocytosis and is required for a correct polar distribution of PIN auxin transporters. The polypeptide is Clathrin heavy chain 1 (Arabidopsis thaliana (Mouse-ear cress)).